Here is a 79-residue protein sequence, read N- to C-terminus: Serine protease inhibitor Kazal-type 1 (79 aa).

An N-terminal signal peptide occupies residues 1–23 (MKVTGIFLLSALALLSLSGNTGA). In terms of domain architecture, Kazal-like spans 26–79 (LGREAKCYNELNGCTKIYDPVCGTDGNTYPNECVLCFENRKRQTSILIQKSGPC). Intrachain disulfides connect cysteine 32–cysteine 61, cysteine 39–cysteine 58, and cysteine 47–cysteine 79.

The protein localises to the secreted. Functionally, serine protease inhibitor which exhibits anti-trypsin activity. In the pancreas, protects against trypsin-catalyzed premature activation of zymogens. In terms of biological role, in the male reproductive tract, binds to sperm heads where it modulates sperm capacitance by inhibiting calcium uptake and nitrogen oxide (NO) production. This is Serine protease inhibitor Kazal-type 1 (SPINK1) from Homo sapiens (Human).